The chain runs to 638 residues: Threonine--tRNA ligase 2 (638 aa).

In terms of domain architecture, TGS spans 1–64 (MSKHVHIQLP…EEDAELSIVT (64 aa)). The tract at residues 245 to 535 (DHRKLGKQLG…LIEHYGGAFP (291 aa)) is catalytic. 3 residues coordinate Zn(2+): cysteine 336, histidine 387, and histidine 512.

The protein belongs to the class-II aminoacyl-tRNA synthetase family. As to quaternary structure, homodimer. Zn(2+) serves as cofactor.

The protein localises to the cytoplasm. The enzyme catalyses tRNA(Thr) + L-threonine + ATP = L-threonyl-tRNA(Thr) + AMP + diphosphate + H(+). Its function is as follows. Catalyzes the attachment of threonine to tRNA(Thr) in a two-step reaction: L-threonine is first activated by ATP to form Thr-AMP and then transferred to the acceptor end of tRNA(Thr). Also edits incorrectly charged L-seryl-tRNA(Thr). The protein is Threonine--tRNA ligase 2 (thrZ) of Bacillus subtilis (strain 168).